We begin with the raw amino-acid sequence, 988 residues long: Protein SEMI-ROLLED LEAF 2 (988 aa).

The disordered stretch occupies residues 844-865; sequence SVDGGLHESPITNTGSSISKTT. The span at 853–865 shows a compositional bias: polar residues; sequence PITNTGSSISKTT.

As to expression, expressed in root tips, and in the vascular bundles of leaf blades, leaf sheaths, and roots, especially in their sclerenchymatous cells.

The protein localises to the nucleus. The protein resides in the cytoplasm. Its function is as follows. Functions in regulating leaf rolling through abaxial side leaf cell differentiation. May be involved in the transdifferentiation process from mesophyll cells to sclerenchymatous cells. The chain is Protein SEMI-ROLLED LEAF 2 from Oryza sativa subsp. japonica (Rice).